The primary structure comprises 1089 residues: SUMO-specific isopeptidase USPL1 (1089 aa).

The interval 90–128 (LISPDSEDCPTPSKPQKRKRLETNCRNSPLPVHSKKTRS) is disordered. The region spanning 215–488 (VQWKNTQALC…ETHIVIWERK (274 aa)) is the USP domain. The active-site Nucleophile is cysteine 224. An SUMO-binding region spans residues 224 to 483 (CWLDCILSAL…EVPASETHIV (260 aa)). The active-site Proton acceptor is histidine 444. Disordered regions lie at residues 687 to 739 (DSQT…KEDQ), 791 to 817 (ISRRSKRMSRKAKHMEELSPRNSSPPL), 835 to 868 (LREQEGSRPAPLRHRSPGNESAISPASRGDAAED), and 891 to 928 (LISSPHREPSLSDHSEPASHCGTPASDQSEPVSHCGSP). Over residues 719–733 (TASSKTVAARSAQNQ) the composition is skewed to polar residues. Residues 791–803 (ISRRSKRMSRKAK) are compositionally biased toward basic residues. Serine 894 bears the Phosphoserine mark. Residues 895 to 907 (PHREPSLSDHSEP) are compositionally biased toward basic and acidic residues.

It belongs to the peptidase C19 family. Interacts with ELL.

It is found in the nucleus. The protein resides in the cajal body. Functionally, SUMO-specific isopeptidase involved in protein desumoylation. Specifically binds SUMO proteins with a higher affinity for SUMO2 and SUMO3 which it cleaves more efficiently. Also able to process full-length SUMO proteins to their mature forms. Plays a key role in RNA polymerase-II-mediated snRNA transcription in the Cajal bodies. Is a component of complexes that can bind to U snRNA genes. This chain is SUMO-specific isopeptidase USPL1 (Uspl1), found in Mus musculus (Mouse).